A 334-amino-acid polypeptide reads, in one-letter code: Galactosylgalactosylxylosylprotein 3-beta-glucuronosyltransferase 1 (334 aa).

The Cytoplasmic segment spans residues 1–6; it reads MPKRRD. An essential for transport from endoplasmic reticulum to Golgi apparatus and interaction with SAR1A region spans residues 3–5; sequence KRR. Residues 7-27 form a helical; Signal-anchor for type II membrane protein membrane-spanning segment; the sequence is ILAIVLIVLPWTLLITVWHQS. The Lumenal segment spans residues 28–334; it reads TLAPLLAVHK…KGFTDPSVEI (307 aa). Positions 37-56 are disordered; it reads KDEGSDPRRETPPGADPREY. Position 91–93 (91–93) interacts with UDP-alpha-D-glucuronate; that stretch reads PTY. Phosphothreonine occurs at positions 103 and 108. Residue D122 coordinates UDP-alpha-D-glucuronate. An N-linked (GlcNAc...) asparagine glycan is attached at N140. The UDP-alpha-D-glucuronate site is built by R165 and R170. N-linked (GlcNAc...) asparagine glycosylation is present at N184. 195 to 197 provides a ligand contact to UDP-alpha-D-glucuronate; that stretch reads DDD. D197 provides a ligand contact to Mn(2+). Positions 245-254 are interaction with galactose moiety of substrate glycoprotein; it reads FDPHRPFAID. Catalysis depends on E284, which acts as the Proton donor/acceptor. An N-linked (GlcNAc...) asparagine glycan is attached at N303. Position 311–313 (311–313) interacts with UDP-alpha-D-glucuronate; the sequence is HTR.

Belongs to the glycosyltransferase 43 family. Homodimer. Interacts with SAR1A. It depends on Mn(2+) as a cofactor. In terms of processing, the soluble form derives from the membrane form by proteolytic processing. As to expression, mainly expressed in the brain.

It localises to the golgi apparatus membrane. The protein resides in the secreted. Its subcellular location is the endoplasmic reticulum membrane. The enzyme catalyses 3-O-(beta-D-galactosyl-(1-&gt;3)-beta-D-galactosyl-(1-&gt;4)-beta-D-xylosyl)-L-seryl-[protein] + UDP-alpha-D-glucuronate = 3-O-(beta-D-GlcA-(1-&gt;3)-beta-D-Gal-(1-&gt;3)-beta-D-Gal-(1-&gt;4)-beta-D-Xyl)-L-seryl-[protein] + UDP + H(+). Its pathway is protein modification; protein glycosylation. Functionally, involved in the biosynthesis of L2/HNK-1 carbohydrate epitope on glycoproteins. Can also play a role in glycosaminoglycan biosynthesis. Substrates include asialo-orosomucoid (ASOR), asialo-fetuin, and asialo-neural cell adhesion molecule. Requires sphingomyelin for activity: stearoyl-sphingomyelin was the most effective, followed by palmitoyl-sphingomyelin and lignoceroyl-sphingomyelin. Activity was demonstrated only for sphingomyelin with a saturated fatty acid and not for that with an unsaturated fatty acid, regardless of the length of the acyl group. This is Galactosylgalactosylxylosylprotein 3-beta-glucuronosyltransferase 1 from Homo sapiens (Human).